Here is a 345-residue protein sequence, read N- to C-terminus: UDP-3-O-acylglucosamine N-acyltransferase (345 aa).

Catalysis depends on His-237, which acts as the Proton acceptor.

This sequence belongs to the transferase hexapeptide repeat family. LpxD subfamily. As to quaternary structure, homotrimer.

It catalyses the reaction a UDP-3-O-[(3R)-3-hydroxyacyl]-alpha-D-glucosamine + a (3R)-hydroxyacyl-[ACP] = a UDP-2-N,3-O-bis[(3R)-3-hydroxyacyl]-alpha-D-glucosamine + holo-[ACP] + H(+). The protein operates within bacterial outer membrane biogenesis; LPS lipid A biosynthesis. In terms of biological role, catalyzes the N-acylation of UDP-3-O-acylglucosamine using 3-hydroxyacyl-ACP as the acyl donor. Is involved in the biosynthesis of lipid A, a phosphorylated glycolipid that anchors the lipopolysaccharide to the outer membrane of the cell. The sequence is that of UDP-3-O-acylglucosamine N-acyltransferase from Geobacter sp. (strain M21).